The primary structure comprises 692 residues: Penicillin-binding protein activator LpoA (692 aa).

An N-terminal signal peptide occupies residues 1–26; sequence MLSSITVRTKSGRLIPLVLAATLLAA. Cysteine 27 carries the N-palmitoyl cysteine lipid modification. The S-diacylglycerol cysteine moiety is linked to residue cysteine 27. Disordered regions lie at residues 297 to 316 and 324 to 373; these read AAAATDNGAPASSGTLAAAT and VNAA…PDAH. The segment covering 332 to 363 has biased composition (low complexity); sequence PSAQGTDAAAPAAPNDSAALPPLDAAGDPIAP.

This sequence belongs to the LpoA family. As to quaternary structure, interacts with PBP1a.

The protein localises to the cell outer membrane. Functionally, regulator of peptidoglycan synthesis that is essential for the function of penicillin-binding protein 1A (PBP1a). The polypeptide is Penicillin-binding protein activator LpoA (Edwardsiella piscicida).